The primary structure comprises 670 residues: Solute carrier organic anion transporter family member 1A5 (670 aa).

Residues 1 to 20 are Cytoplasmic-facing; sequence MGETEKRIATHGVRCFSKIK. A helical transmembrane segment spans residues 21–40; the sequence is MFLLALTCAYVSKSLSGIYM. Residues 41–59 lie on the Extracellular side of the membrane; the sequence is NSMLTQIERQFDIPTSIVG. The helical transmembrane segment at 60–80 threads the bilayer; it reads LINGSFEIGNLLLIILVSYFG. Topologically, residues 81–86 are cytoplasmic; sequence TKLHRP. Residues 87–111 form a helical membrane-spanning segment; that stretch reads IMIGIGCVIMGLGCFLMSLPHFLMG. The Extracellular segment spans residues 112 to 155; that stretch reads RYEYETTISPTSNLSSNSFLCMENRTQTLKPTQDPAECVKEMKS. Asn124 and Asn135 each carry an N-linked (GlcNAc...) asparagine glycan. Residues 156 to 184 traverse the membrane as a helical segment; sequence LMWIYVLVGNIIRGIGETPIMPLGISYIE. Over 185 to 203 the chain is Cytoplasmic; the sequence is DFAKSENSPLYIGILESGK. The helical transmembrane segment at 204 to 224 threads the bilayer; sequence MIGPIVGLLLGSFCARIYVDT. The Extracellular segment spans residues 225–242; the sequence is GSVNTDDLTITPTDTRWV. A helical transmembrane segment spans residues 243–267; that stretch reads GAWWIGFLVCAGVNILTSIPFFFFP. Residues 268-311 are Cytoplasmic-facing; the sequence is KTLPKEGLQDNVARTENDKEEKHREKAKEENRGITKDFLPFMKS. The chain crosses the membrane as a helical span at residues 312 to 333; it reads LSCNPIYMLLILTSVLQINAFI. The Extracellular segment spans residues 334 to 353; the sequence is NMFTFLPKYLEQQYGKSTSE. A helical membrane pass occupies residues 354 to 377; the sequence is VVLLIGVCNLPPICIGYLLIGFIM. Residues 378–381 lie on the Cytoplasmic side of the membrane; the sequence is KKFR. The helical transmembrane segment at 382–405 threads the bilayer; that stretch reads ITVKKAAYMAFCLSLFEYLLSYFH. At 406–513 the chain is on the extracellular side; the sequence is FMISCDNFQV…PECANKLQYF (108 aa). One can recognise a Kazal-like domain in the interval 433–488; the sequence is NKVLADCNTRCSCLTNTWDPVCGDNGLSYMSACLAGCEKSVGMGTHMVFQNCSCIQ. Cystine bridges form between Cys439/Cys469, Cys445/Cys465, and Cys454/Cys486. Asn483 and Asn492 each carry an N-linked (GlcNAc...) asparagine glycan. A helical membrane pass occupies residues 514 to 536; the sequence is LIMSVIGSFIYSITAIPGYMVLL. The Cytoplasmic portion of the chain corresponds to 537–545; the sequence is RCIKSEEKS. A helical transmembrane segment spans residues 546 to 571; that stretch reads LGIGLHAFCTRIFAGIPAPIYFGALI. Over 572 to 605 the chain is Extracellular; it reads DRTCLHWGTLKCGEPGACRIYNINNFRRIYLVLP. Residues 606 to 623 form a helical membrane-spanning segment; that stretch reads AALRGSSYLPAFFILILM. At 624 to 670 the chain is on the cytoplasmic side; it reads RKFQLPGEMYSSETELADMKQTVKKSECTDVHGIPKVENDGELKTKL.

Belongs to the organo anion transporter (TC 2.A.60) family. Expressed in brain, choroid plexus and lung, but not in liver or kidney.

It localises to the cell membrane. Its subcellular location is the basal cell membrane. It carries out the reaction taurocholate(out) = taurocholate(in). The enzyme catalyses glycocholate(out) = glycocholate(in). It catalyses the reaction taurochenodeoxycholate(out) = taurochenodeoxycholate(in). The catalysed reaction is tauroursodeoxycholate(out) = tauroursodeoxycholate(in). It carries out the reaction 3,3',5'-triiodo-L-thyronine(out) = 3,3',5'-triiodo-L-thyronine(in). The enzyme catalyses L-thyroxine(out) = L-thyroxine(in). It catalyses the reaction taurodeoxycholate(out) = taurodeoxycholate(in). The catalysed reaction is glycodeoxycholate(out) = glycodeoxycholate(in). It carries out the reaction glycochenodeoxycholate(out) = glycochenodeoxycholate(in). The enzyme catalyses glycoursodeoxycholate(out) = glycoursodeoxycholate(in). It catalyses the reaction estrone 3-sulfate(out) = estrone 3-sulfate(in). The catalysed reaction is prostaglandin E2(out) = prostaglandin E2(in). It carries out the reaction substance P(out) = substance P(in). Its function is as follows. Na(+)-independent transporter that mediates the cellular uptake of a broad range of organic anions such as the endogenous bile salts cholate and deoxycholate, either in their unconjugated or conjugated forms (taurocholate and glycocholate), estrone 3-sulfate and prostaglandin E2, at the plasma membrane. Responsible for intestinal absorption of bile acids. Capable of thyroid hormone transport (both T3 or 3,3',5'-triiodo-L-thyronine, and T4 or L-tyroxine). Plays roles in blood-brain and -cerebrospinal fluid barrier transport of organic anions and signal mediators, and in hormone uptake by neural cells. May also play a role in the reuptake of neuropeptides such as substance P/TAC1 and vasoactive intestinal peptide/VIP released from retinal neurons. Shows a pH-sensitive substrate specificity which may be ascribed to the protonation state of the binding site and leads to a stimulation of substrate transport in an acidic microenvironment. Hydrogencarbonate/HCO3(-) acts as the probable counteranion that exchanges for organic anions. May contribute to regulate the transport of organic compounds in testis across the blood-testis-barrier. The chain is Solute carrier organic anion transporter family member 1A5 (Slco1a5) from Mus musculus (Mouse).